Consider the following 426-residue polypeptide: Endothelin-1 receptor (426 aa).

The signal sequence occupies residues 1 to 20; it reads METFCLKVTFWVALVGYVIG. Over 21 to 79 the chain is Extracellular; sequence DHPESYSTNLSTPVDFTTFHGTELSFLVTTHRPTNLALPSNGSMHSYCPQQTKITSAFK. N-linked (GlcNAc...) asparagine glycosylation is found at N29 and N61. A helical membrane pass occupies residues 80–101; sequence YINTVISCTIFIVGMVGNATLL. Residues 102–111 lie on the Cytoplasmic side of the membrane; it reads RIIYQNKCMR. Residues 112 to 131 traverse the membrane as a helical segment; the sequence is NGPNALIASLALGDLIYVVI. Residues 132–158 are Extracellular-facing; sequence DLPINVFKLLAGRWPFDHNDFGVFLCK. C157 and C238 are disulfide-bonded. A helical membrane pass occupies residues 159 to 180; it reads LFPFLQKSSVGITVLNLCALSV. At 181–204 the chain is on the cytoplasmic side; it reads DRYRAVASWSRVQGIGIPLITAIE. The helical transmembrane segment at 205-228 threads the bilayer; the sequence is IVSIWILSFILAIPEAIGFVMVPF. The Extracellular portion of the chain corresponds to 229 to 255; sequence EYKGEQHKTCMLNATSKFMEFYQDVKD. A glycan (N-linked (GlcNAc...) asparagine) is linked at N241. The chain crosses the membrane as a helical span at residues 256–277; it reads WWLFGFYFCMPLVCTAIFYTLM. At 278 to 305 the chain is on the cytoplasmic side; the sequence is TCEMLNRRNGSLRIALSEHLKQRREVAK. Residues 306-327 traverse the membrane as a helical segment; that stretch reads TVFCLVVIFALCWFPLHLSRIL. Residues 328–346 are Extracellular-facing; that stretch reads KKTVYDEMDKNRCELLSFL. A helical transmembrane segment spans residues 347 to 371; that stretch reads RLMDYIGINLATMNSCINPIALYFV. The Cytoplasmic segment spans residues 372 to 426; it reads SKKFKNCFQSCLCCCCYQSKSLMTSVPMNGTSIQWKNHEQNNHNTERSSHKDSIN. Position 424 is a phosphoserine (S424).

It belongs to the G-protein coupled receptor 1 family. Endothelin receptor subfamily. EDNRA sub-subfamily. In terms of assembly, interacts with HDAC7 and KAT5.

It is found in the cell membrane. Its function is as follows. Receptor for endothelin-1. Mediates its action by association with G proteins that activate a phosphatidylinositol-calcium second messenger system. The rank order of binding affinities for ET-A is: ET1 &gt; ET2 &gt;&gt; ET3. The sequence is that of Endothelin-1 receptor from Canis lupus familiaris (Dog).